Here is a 604-residue protein sequence, read N- to C-terminus: MATTGEKAIYEDQNNVNIIENVVDVANGINESPKTLFEEDGSSRDSGVSMTSCSDKSDASPEEDVDFSKLESGRVALTDCSNFVSILQRNSSVSSSRSSSFYNYDTPTGRKMKTVFDLDSLDHSEYEKRVMSERPTDNHRKRTSSSMSPSVTLLDRKRSRNLSLVAPQSDKSCRYNGLNNPRDDPFGDEDDEVFEQSNVRNSQVQNTSIFAQPAPRTATSLWDLAPPMFFERKTSDTSGNGSFQERPKQILRAMSVGEIDSELPPTLEVKYTLPGVDNPQRESQAFRSISPTTLLLEFQRLGDDFDKKYIIVDCRFPFEYKGGHVKGAINLFRHDKIKPIFFPENGEASSFQNRVPIFYCEYSQKRGPTMAHAVRSIDRVLNELRYPHVEYPEMYLLDYGYKSLWSTAECRQICEPCSYIPMTHSSFSMEFKSARLERHHSMASLKPNGETSHREEKKKRCTRSVIRRNNSSLNMLSRSSSALTSTGSKTSSMENILYGLDDERRPKWVSAFDIQSTESENDLDAALIYQRNISSNASNASSIVNLAEERIVQLGLQVITPDFPDRPSESSSTTPAGEHLPLGEGGHQIPCGILDFSSISDDAE.

Disordered regions lie at residues 33–67 (PKTLFEEDGSSRDSGVSMTSCSDKSDASPEEDVDF) and 127–188 (EKRV…PFGD). The segment covering 44–54 (RDSGVSMTSCS) has biased composition (polar residues). The span at 127–138 (EKRVMSERPTDN) shows a compositional bias: basic and acidic residues. Positions 305–413 (FDKKYIIVDC…LWSTAECRQI (109 aa)) constitute a Rhodanese domain. Disordered stretches follow at residues 443–464 (ASLKPNGETSHREEKKKRCTRS) and 562–588 (DFPDRPSESSSTTPAGEHLPLGEGGHQ).

It belongs to the MPI phosphatase family.

The enzyme catalyses O-phospho-L-tyrosyl-[protein] + H2O = L-tyrosyl-[protein] + phosphate. The protein is M-phase inducer phosphatase cdc-25.1 (cdc-25.1) of Caenorhabditis elegans.